The primary structure comprises 168 residues: Ribosome-binding factor A (168 aa).

Basic and acidic residues predominate over residues Val122–Arg136. The interval Val122–Gly168 is disordered. The span at Glu144–Glu159 shows a compositional bias: acidic residues.

It belongs to the RbfA family. As to quaternary structure, monomer. Binds 30S ribosomal subunits, but not 50S ribosomal subunits or 70S ribosomes.

The protein localises to the cytoplasm. Functionally, one of several proteins that assist in the late maturation steps of the functional core of the 30S ribosomal subunit. Associates with free 30S ribosomal subunits (but not with 30S subunits that are part of 70S ribosomes or polysomes). Required for efficient processing of 16S rRNA. May interact with the 5'-terminal helix region of 16S rRNA. The chain is Ribosome-binding factor A from Frankia casuarinae (strain DSM 45818 / CECT 9043 / HFP020203 / CcI3).